We begin with the raw amino-acid sequence, 431 residues long: Glutamate--tRNA ligase 1 (431 aa).

The 'HIGH' region motif lies at 6-16; the sequence is PSPTGDMHIGN. The 'KMSKS' region signature appears at 235–239; sequence KMSKR. ATP is bound at residue Lys-238.

This sequence belongs to the class-I aminoacyl-tRNA synthetase family. Glutamate--tRNA ligase type 1 subfamily. In terms of assembly, monomer.

The protein resides in the cytoplasm. It carries out the reaction tRNA(Glu) + L-glutamate + ATP = L-glutamyl-tRNA(Glu) + AMP + diphosphate. Catalyzes the attachment of glutamate to tRNA(Glu) in a two-step reaction: glutamate is first activated by ATP to form Glu-AMP and then transferred to the acceptor end of tRNA(Glu). In Campylobacter jejuni subsp. jejuni serotype O:6 (strain 81116 / NCTC 11828), this protein is Glutamate--tRNA ligase 1.